Here is a 130-residue protein sequence, read N- to C-terminus: Small ribosomal subunit protein uS8 (130 aa).

This sequence belongs to the universal ribosomal protein uS8 family. Part of the 30S ribosomal subunit.

Functionally, one of the primary rRNA binding proteins, it binds directly to 16S rRNA central domain where it helps coordinate assembly of the platform of the 30S subunit. This is Small ribosomal subunit protein uS8 from Halorubrum lacusprofundi (strain ATCC 49239 / DSM 5036 / JCM 8891 / ACAM 34).